Here is a 1347-residue protein sequence, read N- to C-terminus: BTB/POZ domain-containing protein 1 (1347 aa).

ANK repeat units follow at residues 51 to 81 (YGRT…DVFV) and 86 to 115 (SGYT…SFRS). 4 RCC1 repeats span residues 148 to 198 (GNEL…DKIL), 215 to 264 (SQNV…ALTK), 265 to 322 (FGSI…AWTD), and 324 to 372 (DIYS…CLLQ). 2 BTB domains span residues 619 to 698 (SDVT…LSPW) and 758 to 829 (MDTV…VELF). 4 disordered regions span residues 1006 to 1029 (SSNQ…NVVN), 1104 to 1139 (EKAD…SKQV), 1193 to 1237 (EGSS…PLSI), and 1286 to 1347 (GILK…RAVK). Positions 1013–1023 (LNKEDAEEKSP) are enriched in basic and acidic residues. 2 stretches are compositionally biased toward polar residues: residues 1208–1237 (SNGS…PLSI) and 1297–1306 (NRKQGQASKQ). A compositionally biased stretch (basic residues) spans 1336–1347 (TTHKKGKARAVK).

Interacts with cul3.

Its pathway is protein modification; protein ubiquitination. Functionally, probable substrate-specific adapter of an E3 ubiquitin-protein ligase complex which mediates the ubiquitination and subsequent proteasomal degradation of target proteins. The sequence is that of BTB/POZ domain-containing protein 1 (btb1) from Schizosaccharomyces pombe (strain 972 / ATCC 24843) (Fission yeast).